A 666-amino-acid polypeptide reads, in one-letter code: DNA mismatch repair protein MutL (666 aa).

This sequence belongs to the DNA mismatch repair MutL/HexB family.

In terms of biological role, this protein is involved in the repair of mismatches in DNA. It is required for dam-dependent methyl-directed DNA mismatch repair. May act as a 'molecular matchmaker', a protein that promotes the formation of a stable complex between two or more DNA-binding proteins in an ATP-dependent manner without itself being part of a final effector complex. This chain is DNA mismatch repair protein MutL, found in Clostridium botulinum (strain Loch Maree / Type A3).